Here is a 154-residue protein sequence, read N- to C-terminus: Transcriptional repressor NrdR (154 aa).

A zinc finger spans residues 3–34; sequence CPFCRHPDSRVVDSREADEGQAIRRRRSCPEC. One can recognise an ATP-cone domain in the interval 46-136; it reads LAVVKRSGVT…VYRGFSSAED (91 aa).

It belongs to the NrdR family. Zn(2+) serves as cofactor.

Functionally, negatively regulates transcription of bacterial ribonucleotide reductase nrd genes and operons by binding to NrdR-boxes. This chain is Transcriptional repressor NrdR, found in Mycobacteroides abscessus (strain ATCC 19977 / DSM 44196 / CCUG 20993 / CIP 104536 / JCM 13569 / NCTC 13031 / TMC 1543 / L948) (Mycobacterium abscessus).